The sequence spans 416 residues: CinA-like protein (416 aa).

This sequence belongs to the CinA family.

This is CinA-like protein from Nostoc punctiforme (strain ATCC 29133 / PCC 73102).